The primary structure comprises 1149 residues: Guanine nucleotide exchange factor DBS (1149 aa).

The CRAL-TRIO domain maps to 52 to 224; sequence AATASDEIMH…DLGGTLDYCH (173 aa). The stretch at 351–456 is one Spectrin repeat; sequence LQLRHFEQGF…VTRRRGLLSK (106 aa). Phosphoserine is present on residues Ser457, Ser462, Ser471, and Ser480. Residues 503–529 are a coiled coil; it reads LETGAENKIQELNEIYKEYECILNQDL. A disordered region spans residues 555-627; it reads KKLAAKQTRP…RTSSTGEEEE (73 aa). The span at 583-594 shows a compositional bias: low complexity; sequence PGSWRSSENSSS. Basic and acidic residues predominate over residues 607–616; it reads AKSEMSEPRQ. Ser621 bears the Phosphoserine mark. Thr622 bears the Phosphothreonine mark. Residues 632 to 812 form the DH domain; that stretch reads LRRHVMNELL…LGILKAVNDS (181 aa). The 110-residue stretch at 841 to 950 folds into the PH domain; it reads TDHKKGHTKV…IRKVLTSQLQ (110 aa). Residues 956–1033 are disordered; sequence SQHRALEQSH…EAPEEDGGWS (78 aa). Residues 966 to 978 show a composition bias toward low complexity; sequence SLPLPTPSSTSPT. A phosphoserine mark is found at Ser1033, Ser1034, Ser1041, and Ser1042. The region spanning 1055–1116 is the SH3 domain; that stretch reads LVPGKYTVVM…PASSLSTLLG (62 aa).

This sequence belongs to the MCF2 family. Interacts with GTP-bound RAC1. Interacts with CDC42. Interacts with RHOA. Interacts with CCPG1, which results in specific inhibition of its exchange activity toward RHOA, but does not affect its activity on CDC42. Expressed at low levels in several hemopoietic cell lines and in thymus and spleen, and at higher levels in other tissues, particularly in brain.

It is found in the cytoplasm. It localises to the cell membrane. Its function is as follows. Guanine nucleotide exchange factor that catalyzes guanine nucleotide exchange on RHOA and CDC42, and thereby contributes to the regulation of RHOA and CDC42 signaling pathways. Seems to lack activity with RAC1. Becomes activated and highly tumorigenic by truncation of the N-terminus. This is Guanine nucleotide exchange factor DBS (Mcf2l) from Mus musculus (Mouse).